The primary structure comprises 629 residues: MSSTYARFDTVFLLSRFAGAKYSPLWPSSSSSSHSSLLSSGIHLRAKPNSRLRSVTGASSSSSGPIIAGSESIEIKSLPTKPIEGQKTGTSGLRKKVKVFMQDNYLANWIQALFNSLPLEDYKDATLVLGGDGRYFNKEASQIIIKIAAGNGVGKILVGQEGILSTPAVSAVIRKRKANGGFIMSASHNPGGPEYDWGIKFNYSSGQPAPESITDKIYGNTLSISEIKVAEIPDIDLSHVGVTKYGNFSVEVIDPISDYLELMEDVFDFDLIRGLLSRSDFGFMFDAMHAVTGAYAKPIFVDNLEAKPDSISNGVPLEDFGHGHPDPNLTYAKDLVDVMYRDDGPDFGAASDGDGDRNMVLGNKFFVTPSDSVAIIAANAQEAIPYFRAGPKGLARSMPTSGALDRVAEKLKLPFFEVPTGWKFFGNLMDAGKLSICGEESFGTGSDHIREKDGIWAVLAWLSILAHRIKDKKPGEKLVSVADVVNEYWATYGRNFFSRYDYEECESEGANKMIEYLRDIVAKSKAGENYGNYVLQFADDFSYKDPVDGSVASKQGVRFVFTDGSRIIYRLSGNGSAGATVRIYIEQFEPDVSKHDVDAQIAIKPLIDLALSVSKLKEFTGREKPTVIT.

A chloroplast-targeting transit peptide spans Met1–Gly69. Arg94 and Ser187 together coordinate alpha-D-glucose 1,6-bisphosphate. Ser187 acts as the Phosphoserine intermediate in catalysis. Residues Ser187, Asp352, Asp354, and Asp356 each contribute to the Mg(2+) site. Phosphoserine is present on Ser187. Alpha-D-glucose 1,6-bisphosphate is bound by residues Asp356, Arg357, Thr420, Glu439, Ser441, and Lys452.

It belongs to the phosphohexose mutase family. In terms of assembly, monomer. Requires Mg(2+) as cofactor.

Its subcellular location is the plastid. It localises to the chloroplast. The catalysed reaction is alpha-D-glucose 1-phosphate = alpha-D-glucose 6-phosphate. It carries out the reaction O-phospho-L-seryl-[protein] + alpha-D-glucose 1-phosphate = alpha-D-glucose 1,6-bisphosphate + L-seryl-[protein]. It catalyses the reaction alpha-D-glucose 1,6-bisphosphate + L-seryl-[protein] = O-phospho-L-seryl-[protein] + alpha-D-glucose 6-phosphate. With respect to regulation, inhibited by the Calvin cycle intermediates fructose-1,6-bisphosphate and ribulose-1,5-bisphosphate. In terms of biological role, catalyzes the reversible isomerization of alpha-D-glucose 1-phosphate to alpha-D-glucose 6-phosphate. The mechanism proceeds via the intermediate compound alpha-D-glucose 1,6-bisphosphate. This enzyme participates in both the breakdown and synthesis of glucose. In Brassica napus (Rape), this protein is Phosphoglucomutase, chloroplastic (PGMP).